Here is a 190-residue protein sequence, read N- to C-terminus: Scytalone dehydratase-like protein Arp1 (190 aa).

Tyr-67 is a substrate binding site. Catalysis depends on residues His-102 and His-127. Asn-148 serves as a coordination point for substrate.

Belongs to the scytalone dehydratase family. Homotrimer. Each subunit contains an active site, located in the central part of the hydrophobic core of the monomer, which functions independently.

Scytalone dehydratase-like protein; part of the Pks2 gene cluster that mediates the formation of infectious structures (appressoria), enabling these fungi to kill insects faster. The product of the Pks2 gene cluster is different from the one of Pks1 and has still not been identified. In Metarhizium anisopliae (strain ARSEF 549), this protein is Scytalone dehydratase-like protein Arp1.